The primary structure comprises 266 residues: Hydroxyethylthiazole kinase (266 aa).

M43 is a substrate binding site. R119 and T166 together coordinate ATP. Residue G193 participates in substrate binding.

Belongs to the Thz kinase family. The cofactor is Mg(2+).

The catalysed reaction is 5-(2-hydroxyethyl)-4-methylthiazole + ATP = 4-methyl-5-(2-phosphooxyethyl)-thiazole + ADP + H(+). Its pathway is cofactor biosynthesis; thiamine diphosphate biosynthesis; 4-methyl-5-(2-phosphoethyl)-thiazole from 5-(2-hydroxyethyl)-4-methylthiazole: step 1/1. Its function is as follows. Catalyzes the phosphorylation of the hydroxyl group of 4-methyl-5-beta-hydroxyethylthiazole (THZ). This Methanococcus maripaludis (strain DSM 14266 / JCM 13030 / NBRC 101832 / S2 / LL) protein is Hydroxyethylthiazole kinase.